The following is a 111-amino-acid chain: Large ribosomal subunit protein uL22 (111 aa).

This sequence belongs to the universal ribosomal protein uL22 family. In terms of assembly, part of the 50S ribosomal subunit.

In terms of biological role, this protein binds specifically to 23S rRNA; its binding is stimulated by other ribosomal proteins, e.g. L4, L17, and L20. It is important during the early stages of 50S assembly. It makes multiple contacts with different domains of the 23S rRNA in the assembled 50S subunit and ribosome. The globular domain of the protein is located near the polypeptide exit tunnel on the outside of the subunit, while an extended beta-hairpin is found that lines the wall of the exit tunnel in the center of the 70S ribosome. In Chlamydia muridarum (strain MoPn / Nigg), this protein is Large ribosomal subunit protein uL22.